The chain runs to 191 residues: Cdc42 homolog (191 aa).

10–17 (GDGAVGKT) contributes to the GTP binding site. Positions 32–40 (YVPTVFDNY) match the Effector region motif. GTP-binding positions include 57–61 (DTAGQ) and 115–118 (TQID). Cysteine methyl ester is present on cysteine 188. Residue cysteine 188 is the site of S-geranylgeranyl cysteine attachment. A propeptide spans 189-191 (KFL) (removed in mature form).

This sequence belongs to the small GTPase superfamily. Rho family. CDC42 subfamily.

It is found in the cell junction. It localises to the adherens junction. The protein localises to the cell membrane. The enzyme catalyses GTP + H2O = GDP + phosphate + H(+). Functionally, regulates mbt kinase activity and is also required to recruit mbt to adherens junctions. Together with mbt, regulates photoreceptor cell morphogenesis. In Drosophila pseudoobscura pseudoobscura (Fruit fly), this protein is Cdc42 homolog.